Consider the following 123-residue polypeptide: Large ribosomal subunit protein bL12 (123 aa).

It belongs to the bacterial ribosomal protein bL12 family. Homodimer. Part of the ribosomal stalk of the 50S ribosomal subunit. Forms a multimeric L10(L12)X complex, where L10 forms an elongated spine to which 2 to 4 L12 dimers bind in a sequential fashion. Binds GTP-bound translation factors.

Functionally, forms part of the ribosomal stalk which helps the ribosome interact with GTP-bound translation factors. Is thus essential for accurate translation. In Acinetobacter baumannii (strain AB307-0294), this protein is Large ribosomal subunit protein bL12.